Consider the following 411-residue polypeptide: Methylthioribose-1-phosphate isomerase (411 aa).

Position 2 is an N-acetylserine (serine 2). Aspartate 280 (proton donor) is an active-site residue. Serine 351 carries the phosphoserine modification.

This sequence belongs to the eIF-2B alpha/beta/delta subunits family. MtnA subfamily. As to quaternary structure, homodimer.

It localises to the cytoplasm. It is found in the nucleus. The catalysed reaction is 5-(methylsulfanyl)-alpha-D-ribose 1-phosphate = 5-(methylsulfanyl)-D-ribulose 1-phosphate. Its pathway is amino-acid biosynthesis; L-methionine biosynthesis via salvage pathway; L-methionine from S-methyl-5-thio-alpha-D-ribose 1-phosphate: step 1/6. Its function is as follows. Catalyzes the interconversion of methylthioribose-1-phosphate (MTR-1-P) into methylthioribulose-1-phosphate (MTRu-1-P). The protein is Methylthioribose-1-phosphate isomerase of Saccharomyces cerevisiae (strain JAY291) (Baker's yeast).